We begin with the raw amino-acid sequence, 517 residues long: zeta-carotene-forming phytoene desaturase (517 aa).

An FAD-binding site is contributed by 11-44 (VVVGAGVGGLAAAARLAHQGFDVQVFEKTQGPGG).

Belongs to the carotenoid/retinoid oxidoreductase family. The cofactor is FAD.

It carries out the reaction 15-cis-phytoene + 2 A = all-trans-zeta-carotene + 2 AH2. Its pathway is carotenoid biosynthesis; lycopene biosynthesis. Its function is as follows. Dehydrogenates carotenes in the cis conformation: has cis-to-trans isomerase activity and mediates dehydrogenation of cis-phytoene, producing zeta-carotene via the intermediary of phytofluene by the symmetrical introduction of 2 double bonds at the C-11 and C-11' positions of phytoene. The protein is zeta-carotene-forming phytoene desaturase (carA2) of Myxococcus xanthus.